We begin with the raw amino-acid sequence, 291 residues long: Oxidative stress-responsive serine-rich protein 1 (291 aa).

Positions arginine 44–aspartate 139 are disordered. The span at serine 65–lysine 83 shows a compositional bias: basic residues. Composition is skewed to polar residues over residues cysteine 95–glutamate 113 and lysine 127–aspartate 139. Position 143 is a phosphothreonine (threonine 143).

Ubiquitous with high level in testis, placenta and cardiac myocytes. As to expression, expressed in testis, unpreganant uterus and cardiac myocytes.

The protein is Oxidative stress-responsive serine-rich protein 1 (Oser1) of Rattus norvegicus (Rat).